The primary structure comprises 213 residues: Endonuclease III (213 aa).

In terms of domain architecture, HhH spans 108–127 (FKELIKLPGVGRKTANVVLN). [4Fe-4S] cluster-binding residues include C187, C194, C197, and C203.

This sequence belongs to the Nth/MutY family. [4Fe-4S] cluster is required as a cofactor.

It catalyses the reaction 2'-deoxyribonucleotide-(2'-deoxyribose 5'-phosphate)-2'-deoxyribonucleotide-DNA = a 3'-end 2'-deoxyribonucleotide-(2,3-dehydro-2,3-deoxyribose 5'-phosphate)-DNA + a 5'-end 5'-phospho-2'-deoxyribonucleoside-DNA + H(+). Functionally, DNA repair enzyme that has both DNA N-glycosylase activity and AP-lyase activity. The DNA N-glycosylase activity releases various damaged pyrimidines from DNA by cleaving the N-glycosidic bond, leaving an AP (apurinic/apyrimidinic) site. The AP-lyase activity cleaves the phosphodiester bond 3' to the AP site by a beta-elimination, leaving a 3'-terminal unsaturated sugar and a product with a terminal 5'-phosphate. The protein is Endonuclease III of Rickettsia felis (strain ATCC VR-1525 / URRWXCal2) (Rickettsia azadi).